The sequence spans 361 residues: S-adenosylmethionine:tRNA ribosyltransferase-isomerase (361 aa).

The protein belongs to the QueA family. In terms of assembly, monomer.

It is found in the cytoplasm. The enzyme catalyses 7-aminomethyl-7-carbaguanosine(34) in tRNA + S-adenosyl-L-methionine = epoxyqueuosine(34) in tRNA + adenine + L-methionine + 2 H(+). It participates in tRNA modification; tRNA-queuosine biosynthesis. In terms of biological role, transfers and isomerizes the ribose moiety from AdoMet to the 7-aminomethyl group of 7-deazaguanine (preQ1-tRNA) to give epoxyqueuosine (oQ-tRNA). This Rhizobium etli (strain ATCC 51251 / DSM 11541 / JCM 21823 / NBRC 15573 / CFN 42) protein is S-adenosylmethionine:tRNA ribosyltransferase-isomerase.